Reading from the N-terminus, the 412-residue chain is MAAALLARARGPLRRALGVRDWRRLHTVYQSVELPETHQMLRQTCRDFAEKELVPIAAQLDREHLFPTAQVKKMGELGLLAMDVPEELSGAGLDYLAYSIALEEISRACASTGVIMSVNNSLYLGPILKFGSAQQKQQWITPFTNGDKIGCFALSEPGNGSDAGAASTTAREEGDSWVLNGTKAWITNSWEASATVVFASTDRSRQNKGISAFLVPMPTPGLTLGKKEDKLGIRASSTANLIFEDCRIPKENLLGEPGMGFKIAMQTLDMGRIGIASQALGIAQASLDCAVKYAENRNAFGAPLTKLQNIQFKLADMALALESARLLTWRAAMLKDNKKPFTKESAMAKLAASEAATAISHQAIQILGGMGYVTEMPAERYYRDARITEIYEGTSEIQRLVIAGHLLRSYRS.

A mitochondrion-targeting transit peptide spans 1–24 (MAAALLARARGPLRRALGVRDWRR). Thr-27 is modified (phosphothreonine). Lys-51 is modified (N6-acetyllysine; alternate). Lys-51 carries the N6-succinyllysine; alternate modification. At Lys-72 the chain carries N6-acetyllysine. N6-acetyllysine; alternate is present on Lys-129. Residue Lys-129 is modified to N6-succinyllysine; alternate. FAD contacts are provided by residues 152 to 161 (FALSEPGNGS) and 185 to 187 (WIT). Ser-161 serves as a coordination point for substrate. An N6-acetyllysine modification is found at Lys-208. At Lys-262 the chain carries N6-acetyllysine; alternate. N6-succinyllysine; alternate is present on Lys-262. Residue 269–272 (DMGR) participates in substrate binding. Position 292 is an N6-acetyllysine (Lys-292). An FAD-binding site is contributed by Arg-297. Lys-306 bears the N6-acetyllysine; alternate mark. At Lys-306 the chain carries N6-succinyllysine; alternate. FAD-binding positions include Gln-308 and 365-369 (QILGG). Catalysis depends on Glu-392, which acts as the Proton acceptor. A substrate-binding site is contributed by Gly-393. 394-396 (TSE) is an FAD binding site.

This sequence belongs to the acyl-CoA dehydrogenase family. Homotetramer. It depends on FAD as a cofactor.

It localises to the mitochondrion matrix. The enzyme catalyses a short-chain 2,3-saturated fatty acyl-CoA + oxidized [electron-transfer flavoprotein] + H(+) = a short-chain (2E)-enoyl-CoA + reduced [electron-transfer flavoprotein]. It catalyses the reaction butanoyl-CoA + oxidized [electron-transfer flavoprotein] + H(+) = (2E)-butenoyl-CoA + reduced [electron-transfer flavoprotein]. The catalysed reaction is pentanoyl-CoA + oxidized [electron-transfer flavoprotein] + H(+) = (2E)-pentenoyl-CoA + reduced [electron-transfer flavoprotein]. It carries out the reaction hexanoyl-CoA + oxidized [electron-transfer flavoprotein] + H(+) = (2E)-hexenoyl-CoA + reduced [electron-transfer flavoprotein]. It participates in lipid metabolism; mitochondrial fatty acid beta-oxidation. Short-chain specific acyl-CoA dehydrogenase is one of the acyl-CoA dehydrogenases that catalyze the first step of mitochondrial fatty acid beta-oxidation, an aerobic process breaking down fatty acids into acetyl-CoA and allowing the production of energy from fats. The first step of fatty acid beta-oxidation consists in the removal of one hydrogen from C-2 and C-3 of the straight-chain fatty acyl-CoA thioester, resulting in the formation of trans-2-enoyl-CoA. Among the different mitochondrial acyl-CoA dehydrogenases, short-chain specific acyl-CoA dehydrogenase acts specifically on acyl-CoAs with saturated 4 to 6 carbons long primary chains. The polypeptide is Short-chain specific acyl-CoA dehydrogenase, mitochondrial (Acads) (Mus musculus (Mouse)).